Reading from the N-terminus, the 127-residue chain is Small ribosomal subunit protein uS11 (127 aa).

The protein belongs to the universal ribosomal protein uS11 family. In terms of assembly, part of the 30S ribosomal subunit. Interacts with proteins S7 and S18. Binds to IF-3.

Located on the platform of the 30S subunit, it bridges several disparate RNA helices of the 16S rRNA. Forms part of the Shine-Dalgarno cleft in the 70S ribosome. The protein is Small ribosomal subunit protein uS11 of Chlorobium phaeobacteroides (strain DSM 266 / SMG 266 / 2430).